Consider the following 290-residue polypeptide: MGKDEVMESGGAAGEFAAKDYTDPPPAPLIDAAELGSWSLYRAVIAEFIATLLFLYITVATVIGYKHQTDASASGADAACGGVGVLGIAWAFGGMIFILVYCTAGISGGHINPAVTFGLFLARKVSLVRAILYIVAQCLGAICGVGLVKAFQSAYFNRYGGGANTLAAGYSKGTGLAAEIIGTFVLVYTVFSATDPKRNARDSHVPVLAPLPIGFAVFMVHLATIPITGTGINPARSIGAAVIFNNEKAWHNHWIFWVGPFVGAAIAAFYHQYILRAGAIKALGSFRSNA.

The next 2 membrane-spanning stretches (helical) occupy residues 43-63 (AVIAEFIATLLFLYITVATVI) and 80-100 (CGGVGVLGIAWAFGGMIFILV). The NPA 1 motif lies at 112–114 (NPA). 3 helical membrane passes run 131–151 (ILYIVAQCLGAICGVGLVKAF), 173–193 (GTGLAAEIIGTFVLVYTVFSA), and 207–227 (VLAPLPIGFAVFMVHLATIPI). Residues 233–235 (NPA) carry the NPA 2 motif. The helical transmembrane segment at 255–275 (IFWVGPFVGAAIAAFYHQYIL) threads the bilayer.

This sequence belongs to the MIP/aquaporin (TC 1.A.8) family. PIP (TC 1.A.8.11) subfamily. As to expression, expressed in roots, leaves and anthers.

The protein localises to the cell membrane. Its function is as follows. Aquaporins facilitate the transport of water and small neutral solutes across cell membranes. The polypeptide is Probable aquaporin PIP2-1 (PIP2-1) (Oryza sativa subsp. japonica (Rice)).